The chain runs to 209 residues: Orotate phosphoribosyltransferase (209 aa).

Residues R96, K100, H102, and 122–130 (EDLISTGGS) each bind 5-phospho-alpha-D-ribose 1-diphosphate. Position 126 (S126) interacts with orotate.

This sequence belongs to the purine/pyrimidine phosphoribosyltransferase family. PyrE subfamily. Homodimer. Mg(2+) serves as cofactor.

The enzyme catalyses orotidine 5'-phosphate + diphosphate = orotate + 5-phospho-alpha-D-ribose 1-diphosphate. It functions in the pathway pyrimidine metabolism; UMP biosynthesis via de novo pathway; UMP from orotate: step 1/2. Functionally, catalyzes the transfer of a ribosyl phosphate group from 5-phosphoribose 1-diphosphate to orotate, leading to the formation of orotidine monophosphate (OMP). The polypeptide is Orotate phosphoribosyltransferase (Lactococcus lactis subsp. lactis (strain IL1403) (Streptococcus lactis)).